Consider the following 126-residue polypeptide: Large ribosomal subunit protein bL17c (126 aa).

Residues 1-10 (MIDNGGRFFA) constitute a chloroplast transit peptide.

Component of the chloroplast large ribosomal subunit (LSU). Mature 70S chloroplast ribosomes of higher plants consist of a small (30S) and a large (50S) subunit. The 30S small subunit contains 1 molecule of ribosomal RNA (16S rRNA) and 24 different proteins. The 50S large subunit contains 3 rRNA molecules (23S, 5S and 4.5S rRNA) and 33 different proteins.

The protein localises to the plastid. Its subcellular location is the chloroplast. Component of the chloroplast ribosome (chloro-ribosome), a dedicated translation machinery responsible for the synthesis of chloroplast genome-encoded proteins, including proteins of the transcription and translation machinery and components of the photosynthetic apparatus. The polypeptide is Large ribosomal subunit protein bL17c (RPL17) (Spinacia oleracea (Spinach)).